Here is a 186-residue protein sequence, read N- to C-terminus: Dirigent protein 4 (186 aa).

The first 20 residues, 1–20 (MGKNLGLVVSFYLCITFALG), serve as a signal peptide directing secretion. N-linked (GlcNAc...) asparagine glycosylation is found at asparagine 67, asparagine 126, asparagine 169, and asparagine 180.

Belongs to the plant dirigent protein family. As to quaternary structure, homodimer.

It is found in the secreted. The protein resides in the extracellular space. The protein localises to the apoplast. Dirigent proteins impart stereoselectivity on the phenoxy radical-coupling reaction, yielding optically active lignans from two molecules of coniferyl alcohol in the biosynthesis of lignans, flavonolignans, and alkaloids and thus plays a central role in plant secondary metabolism. This chain is Dirigent protein 4 (DIR4), found in Arabidopsis thaliana (Mouse-ear cress).